The sequence spans 284 residues: Undecaprenyl-diphosphatase (284 aa).

A run of 8 helical transmembrane segments spans residues Ile7 to Leu27, Glu44 to His64, Leu90 to Asp110, Phe116 to Ile136, Val167 to Ile187, Phe197 to Phe217, Phe229 to Phe249, and Phe259 to Phe279.

It belongs to the UppP family.

Its subcellular location is the cell membrane. It catalyses the reaction di-trans,octa-cis-undecaprenyl diphosphate + H2O = di-trans,octa-cis-undecaprenyl phosphate + phosphate + H(+). Its function is as follows. Catalyzes the dephosphorylation of undecaprenyl diphosphate (UPP). Confers resistance to bacitracin. This Lactococcus lactis subsp. cremoris (strain SK11) protein is Undecaprenyl-diphosphatase.